Consider the following 94-residue polypeptide: ESAT-6-like protein EsxL (94 aa).

It belongs to the WXG100 family. ESAT-6 subfamily. Strongly interacts with EsxK to form a heterodimeric complex under reducing conditions. The complex is regulated by the redox state of EsxL.

Its subcellular location is the secreted. Induces apoptosis of host cells. Is immunogenic with highly specific seroreactivity towards TB patients' serum. The polypeptide is ESAT-6-like protein EsxL (Mycobacterium tuberculosis (strain ATCC 25618 / H37Rv)).